A 353-amino-acid chain; its full sequence is S-adenosylmethionine:tRNA ribosyltransferase-isomerase (353 aa).

It belongs to the QueA family. Monomer.

Its subcellular location is the cytoplasm. It catalyses the reaction 7-aminomethyl-7-carbaguanosine(34) in tRNA + S-adenosyl-L-methionine = epoxyqueuosine(34) in tRNA + adenine + L-methionine + 2 H(+). The protein operates within tRNA modification; tRNA-queuosine biosynthesis. In terms of biological role, transfers and isomerizes the ribose moiety from AdoMet to the 7-aminomethyl group of 7-deazaguanine (preQ1-tRNA) to give epoxyqueuosine (oQ-tRNA). The sequence is that of S-adenosylmethionine:tRNA ribosyltransferase-isomerase from Blochmanniella floridana.